The chain runs to 134 residues: Protein Turandot E (134 aa).

The signal sequence occupies residues 1–38; sequence MSYTRTIHSSASILKMNSALQISCLLVVLGCLLGSGHC.

It belongs to the Turandot family.

The protein localises to the secreted. Its function is as follows. A humoral factor that may play a role in stress tolerance. The polypeptide is Protein Turandot E (Drosophila sechellia (Fruit fly)).